Reading from the N-terminus, the 63-residue chain is Chymotrypsin/elastase isoinhibitor 1 (63 aa).

5 cysteine pairs are disulfide-bonded: Cys-5–Cys-38, Cys-14–Cys-33, Cys-17–Cys-29, Cys-21–Cys-60, and Cys-40–Cys-54. In terms of domain architecture, TIL spans 5–60 (CGPNEVWTECTGCEMKCGPDENTPCPLMCRRPSCECSPGRGMRRTNDGKCIPASQC).

The protein belongs to the serine protease inhibitor-like (TIL domain-containing) family.

The protein localises to the secreted. Its function is as follows. Defends the organism against the host's proteinases. The polypeptide is Chymotrypsin/elastase isoinhibitor 1 (Ascaris suum (Pig roundworm)).